We begin with the raw amino-acid sequence, 127 residues long: Large ribosomal subunit protein uL22 (127 aa).

In terms of assembly, part of the 50S ribosomal subunit.

This protein binds specifically to 23S rRNA; its binding is stimulated by other ribosomal proteins, e.g. L4, L17, and L20. It is important during the early stages of 50S assembly. It makes multiple contacts with different domains of the 23S rRNA in the assembled 50S subunit and ribosome. Its function is as follows. The globular domain of the protein is located near the polypeptide exit tunnel on the outside of the subunit, while an extended beta-hairpin is found that lines the wall of the exit tunnel in the center of the 70S ribosome. In Rhodopseudomonas palustris (strain ATCC BAA-98 / CGA009), this protein is Large ribosomal subunit protein uL22.